The following is a 228-amino-acid chain: Carboxy-S-adenosyl-L-methionine synthase (228 aa).

S-adenosyl-L-methionine-binding positions include Tyr30, 55–57 (GSS), 79–80 (DN), and 103–104 (DV).

This sequence belongs to the class I-like SAM-binding methyltransferase superfamily. Cx-SAM synthase family.

The enzyme catalyses prephenate + S-adenosyl-L-methionine = carboxy-S-adenosyl-L-methionine + 3-phenylpyruvate + H2O. Functionally, catalyzes the conversion of S-adenosyl-L-methionine (SAM) to carboxy-S-adenosyl-L-methionine (Cx-SAM). This is Carboxy-S-adenosyl-L-methionine synthase from Staphylococcus epidermidis (strain ATCC 35984 / DSM 28319 / BCRC 17069 / CCUG 31568 / BM 3577 / RP62A).